Here is a 360-residue protein sequence, read N- to C-terminus: Arginase, non-hepatic 3 (360 aa).

Residues His-122, Asp-145, His-147, and Asp-149 each contribute to the Mn(2+) site. Residues 147–151 (HADIN), 158–160 (SGN), and Asp-204 each bind substrate. Mn(2+)-binding residues include Asp-253 and Asp-255. Substrate-binding residues include Thr-267 and Glu-298.

It belongs to the arginase family. In terms of assembly, homotrimer. Mn(2+) is required as a cofactor. As to expression, expressed at differing tadpole stages in tail, intestine, hindlimb and trunk region. Strongest in tadpole tail.

The enzyme catalyses L-arginine + H2O = urea + L-ornithine. The protein operates within nitrogen metabolism; urea cycle; L-ornithine and urea from L-arginine: step 1/1. Its function is as follows. As well as its role in the urea cycle, may be involved in tissue remodeling. This is Arginase, non-hepatic 3 (arg2-c) from Xenopus laevis (African clawed frog).